The sequence spans 594 residues: Lysine--tRNA ligase cla4 (594 aa).

The interval 1–62 (MADPGAVKET…KETSSEQDEA (62 aa)) is disordered. A compositionally biased stretch (basic and acidic residues) spans 18–42 (TGEKVSKTELKKRLKSRAKEAEKQK).

This sequence belongs to the class-II aminoacyl-tRNA synthetase family. As to quaternary structure, homodimer.

It carries out the reaction tRNA(Lys) + L-lysine + ATP = L-lysyl-tRNA(Lys) + AMP + diphosphate. Involved in self-resistance to cladosporin since this product is an inhibitor of lysyl-tRNA synthetase. Cla4 may not be inhibited by cladosporin, thereby imparting cladosporin resistance. When cladosporin biosynthesis is switched on, transcription of cla4 will then be necessary for continued protein synthesis in C.cladosporioides. The sequence is that of Lysine--tRNA ligase cla4 from Cladosporium cladosporioides.